The chain runs to 324 residues: Non-homologous end joining protein Ku 1 (324 aa).

In terms of domain architecture, Ku spans 10-193 (INFGLVTIPV…AKPSDKEIQM (184 aa)). The segment at 256-324 (QARRGRGGQV…SGGRRRRRAS (69 aa)) is disordered. A compositionally biased stretch (basic and acidic residues) spans 281-292 (AELDKKAKELGI).

The protein belongs to the prokaryotic Ku family. Homodimer. Interacts with LigD.

Its function is as follows. With LigD forms a non-homologous end joining (NHEJ) DNA repair enzyme, which repairs dsDNA breaks with reduced fidelity. Binds linear dsDNA with 5'- and 3'- overhangs but not closed circular dsDNA nor ssDNA. Recruits and stimulates the ligase activity of LigD. This chain is Non-homologous end joining protein Ku 1, found in Saccharopolyspora erythraea (strain ATCC 11635 / DSM 40517 / JCM 4748 / NBRC 13426 / NCIMB 8594 / NRRL 2338).